A 318-amino-acid polypeptide reads, in one-letter code: Geranylfarnesyl diphosphate synthase (318 aa).

Isopentenyl diphosphate-binding residues include Lys-31, Arg-34, and His-65. Residues Asp-72 and Asp-76 each contribute to the Mg(2+) site. Arg-81 provides a ligand contact to an all-trans-polyprenyl diphosphate. Arg-82 serves as a coordination point for isopentenyl diphosphate. Residues Lys-166, Thr-167, and Gln-204 each coordinate an all-trans-polyprenyl diphosphate.

This sequence belongs to the FPP/GGPP synthase family. As to quaternary structure, homodimer. Mg(2+) serves as cofactor.

The enzyme catalyses isopentenyl diphosphate + (2E,6E,10E)-geranylgeranyl diphosphate = (2E,6E,10E,14E)-geranylfarnesyl diphosphate + diphosphate. Probably involved in biosynthesis of the precursor for C25 (sesterterpanyl chain) moiety of C25-C25 diether (2,3-di-O-sesterterpanyl-sn-glycero) membrane lipid. Catalyzes the condensation of isopentenyl pyrophosphate with the allylic pyrophosphates to yield all-trans geranylfarnesyl diphosphate (GFPP). Geranylgeranyl diphosphate (GGPP) is the preferred substrate, however methylallyl diphosphate (DMAPP), farnesyl diphosphate (FPP) and geranyl diphosphate (GPP) can also be used as allylic substrate. The sequence is that of Geranylfarnesyl diphosphate synthase (fgs) from Aeropyrum pernix.